We begin with the raw amino-acid sequence, 359 residues long: MYPKMKNDLILRAAKGEEVERPPVWIMRQAGRYLPEYHKLRAKQSFFEMCQTPETACELTLQPVTRFKGLLDAAIIFSDILVIPQALGMQVVMLEQKGPHFPKPLVVPEDIDLLEKTPNISAKLGYVMDAISLTREKLDGQVPLMGFSGAPWTIMAYMIEGGGSKTFAKAKSWLFRYPEASHKLLKIITDATVSYLIQQVYAGAQLLQIFDSWAGELSPEDFTEYAYPYLVRICQEVKQHLKKKKRDEVPMIVFAKGAWYAIDQLCDSGYDVIGLDWTVSPKEAVRIRGNRRVTFQGNLDPNILYGTREIIEARTKEMIQDFGGGKQGYIINLGHGITPGVNPDDVRFFLEKCHQYGSA.

The coproporphyrinogen III site is built by R28, A30, R32, D79, Y157, S212, and H335.

The protein belongs to the uroporphyrinogen decarboxylase family. In terms of assembly, monomer.

It is found in the nucleus. It localises to the cytoplasm. It catalyses the reaction uroporphyrinogen III + 4 H(+) = coproporphyrinogen III + 4 CO2. The enzyme catalyses uroporphyrinogen I + 4 H(+) = coproporphyrinogen I + 4 CO2. The protein operates within porphyrin-containing compound metabolism; protoporphyrin-IX biosynthesis; coproporphyrinogen-III from 5-aminolevulinate: step 4/4. Catalyzes the sequential decarboxylation of four acetate groups of uroporphyrinogen-III (octacarboxyporphyrin) to yield coproporphyrinogen-III (tetracarboxyporphyrin) with the formation of intermediate hepta-, hexa- and penta-carboxylate porphyrinogens in the heme biosynthesis pathway. Acts on a number of porphyrinogens, but only coproporphyrinogen III can ultimately be converted to heme. This is Uroporphyrinogen decarboxylase (hem12) from Schizosaccharomyces pombe (strain 972 / ATCC 24843) (Fission yeast).